The following is a 1128-amino-acid chain: Inactive phospholipase C-like protein 2 (1128 aa).

The tract at residues 1-129 is disordered; the sequence is MAECGRGAAG…KKTVSFSSMP (129 aa). Residue A2 is modified to N-acetylalanine. The residue at position 16 (S16) is a Phosphoserine. The span at 20–30 shows a compositional bias: low complexity; that stretch reads ALGAKGALKAG. The segment covering 31–43 has biased composition (gly residues); it reads AGEGGGGGGGGRL. Position 85 is a phosphothreonine (T85). The PH domain maps to 142–252; sequence NSMVEGSELK…WVTGLRYLIS (111 aa). In terms of domain architecture, PI-PLC X-box spans 427–571; sequence QDMKQPLSHY…LKGKILIKAK (145 aa). T585 carries the phosphothreonine modification. Residues 619–735 enclose the PI-PLC Y-box domain; it reads LSELVSICKS…GYVLRPAIMR (117 aa). The region spanning 735–864 is the C2 domain; the sequence is REEVSFFSAN…TGYRHVPLQS (130 aa). Residues 1100 to 1128 form a disordered region; that stretch reads KPGTENSEAQKPRRSLEAIPEKASDENGD. Residues 1107–1128 show a composition bias toward basic and acidic residues; the sequence is EAQKPRRSLEAIPEKASDENGD. S1114 carries the post-translational modification Phosphoserine.

As to expression, ubiquitously expressed, with a strong expression in skeletal muscle.

The protein resides in the cytoplasm. Functionally, may play an role in the regulation of Ins(1,4,5)P3 around the endoplasmic reticulum. This Mus musculus (Mouse) protein is Inactive phospholipase C-like protein 2 (Plcl2).